The following is a 340-amino-acid chain: Protein-arginine kinase (340 aa).

The Phosphagen kinase C-terminal domain occupies 14 to 244 (IVITTRIRLA…EQIINQENLS (231 aa)). Residues 17–21 (TTRIR), histidine 81, arginine 115, 166–170 (RASVM), and 197–202 (RGLWGE) contribute to the ATP site.

Belongs to the ATP:guanido phosphotransferase family.

The catalysed reaction is L-arginyl-[protein] + ATP = N(omega)-phospho-L-arginyl-[protein] + ADP + H(+). Functionally, catalyzes the specific phosphorylation of arginine residues in proteins. The sequence is that of Protein-arginine kinase from Clostridium acetobutylicum (strain ATCC 824 / DSM 792 / JCM 1419 / IAM 19013 / LMG 5710 / NBRC 13948 / NRRL B-527 / VKM B-1787 / 2291 / W).